A 318-amino-acid polypeptide reads, in one-letter code: MKKMNYLLPEESGEMTLSGITTLRKIEQKLRNLFESQNYQEVMPPNFEYVELYTGLDAGFEQEKMFQFINHEGKSIALRYDFTVPLARNFALSELTEARYSYFGKVFRKEKRHKGRRTESYQVGTELLGLSEVTGDQEILGLTFMSLEALTLKNTIVEIGSAAFYKRLCELSGGDAQLFSELLEKKSLSGMKAFVDKHEMIGAPRDLLLALMTTTDLPTMKKLVLATGDEKLSQALEMLEALNLPDKTAICQIHYDFAMVPAMGYYTGLMFQVYVEGVAQATISGGRYDKLLKQFGKTTGSIGFCVHMDNVVKGLNND.

This sequence belongs to the class-II aminoacyl-tRNA synthetase family. HisZ subfamily. Heteromultimer composed of HisG and HisZ subunits.

It is found in the cytoplasm. The protein operates within amino-acid biosynthesis; L-histidine biosynthesis; L-histidine from 5-phospho-alpha-D-ribose 1-diphosphate: step 1/9. Required for the first step of histidine biosynthesis. May allow the feedback regulation of ATP phosphoribosyltransferase activity by histidine. This Lactococcus lactis subsp. cremoris (strain MG1363) protein is ATP phosphoribosyltransferase regulatory subunit.